A 156-amino-acid chain; its full sequence is Small ribosomal subunit protein uS7 (156 aa).

It belongs to the universal ribosomal protein uS7 family. As to quaternary structure, part of the 30S ribosomal subunit. Contacts proteins S9 and S11.

In terms of biological role, one of the primary rRNA binding proteins, it binds directly to 16S rRNA where it nucleates assembly of the head domain of the 30S subunit. Is located at the subunit interface close to the decoding center, probably blocks exit of the E-site tRNA. The chain is Small ribosomal subunit protein uS7 from Anaeromyxobacter dehalogenans (strain 2CP-C).